Consider the following 1388-residue polypeptide: DNA-directed RNA polymerase subunit beta (1388 aa).

The protein belongs to the RNA polymerase beta chain family. As to quaternary structure, the RNAP catalytic core consists of 2 alpha, 1 beta, 1 beta' and 1 omega subunit. When a sigma factor is associated with the core the holoenzyme is formed, which can initiate transcription.

It carries out the reaction RNA(n) + a ribonucleoside 5'-triphosphate = RNA(n+1) + diphosphate. DNA-dependent RNA polymerase catalyzes the transcription of DNA into RNA using the four ribonucleoside triphosphates as substrates. The protein is DNA-directed RNA polymerase subunit beta of Stenotrophomonas maltophilia (strain K279a).